The sequence spans 27 residues: Ranatuerin-2Cb (27 aa).

A disulfide bridge connects residues Cys20 and Cys25.

As to expression, expressed by the skin glands.

The protein resides in the secreted. Antibacterial activity against Gram-positive bacterium S.aureus (MIC=40 uM) and Gram-negative bacterium E.coli (MIC=2 uM). Has activity against C.albicans (MIC=46 uM). In Lithobates clamitans (Green frog), this protein is Ranatuerin-2Cb.